Consider the following 278-residue polypeptide: Ribonuclease HII (278 aa).

Residues tryptophan 71–proline 259 form the RNase H type-2 domain. Aspartate 77, glutamate 78, and aspartate 168 together coordinate a divalent metal cation.

The protein belongs to the RNase HII family. Mn(2+) serves as cofactor. Mg(2+) is required as a cofactor.

It localises to the cytoplasm. It carries out the reaction Endonucleolytic cleavage to 5'-phosphomonoester.. In terms of biological role, endonuclease that specifically degrades the RNA of RNA-DNA hybrids. In Rhodopseudomonas palustris (strain BisA53), this protein is Ribonuclease HII.